Consider the following 638-residue polypeptide: Growth hormone receptor (638 aa).

The first 18 residues, 1 to 18, serve as a signal peptide directing secretion; the sequence is MDLWQLLLTLALAGSSDA. Residues 19-264 are Extracellular-facing; that stretch reads FSGSEATAAI…SQFTCEEDFY (246 aa). An N-linked (GlcNAc...) asparagine glycan is attached at asparagine 46. Cystine bridges form between cysteine 56-cysteine 66 and cysteine 101-cysteine 112. An N-linked (GlcNAc...) asparagine glycan is attached at asparagine 115. The cysteines at positions 126 and 140 are disulfide-linked. One can recognise a Fibronectin type-III domain in the interval 151 to 254; that stretch reads PPIALNWTLL…EVLYVTLPQM (104 aa). N-linked (GlcNAc...) asparagine glycosylation is found at asparagine 156, asparagine 161, and asparagine 200. Residues 240–244 carry the WSXWS motif motif; the sequence is YGEFS. The required for ADAM17-mediated proteolysis stretch occupies residues 260–262; that stretch reads EED. The chain crosses the membrane as a helical span at residues 265–288; sequence FPWLLIIIFGIFGLTVMLFVFLFS. Residues 289–638 lie on the Cytoplasmic side of the membrane; that stretch reads KQQRIKMLIL…STDQLNKIMP (350 aa). The tract at residues 294–379 is required for JAK2 binding; the sequence is KMLILPPVPV…HEKSHSNLGV (86 aa). Positions 297 to 305 match the Box 1 motif motif; the sequence is ILPPVPVPK. A UbE motif motif is present at residues 340 to 349; sequence DSWVEFIELD. Phosphoserine is present on serine 341. The disordered stretch occupies residues 353–391; the sequence is PDEKTEESDTDRLLSSDHEKSHSNLGVKDGDSGRTSCCE. Residues 362 to 384 show a composition bias toward basic and acidic residues; sequence TDRLLSSDHEKSHSNLGVKDGDS. A phosphotyrosine; by JAK2 mark is found at tyrosine 487 and tyrosine 595.

It belongs to the type I cytokine receptor family. Type 1 subfamily. In terms of assembly, on growth hormone (GH) binding, forms homodimers and binds JAK2 via a box 1-containing domain. Post-translationally, the soluble form (GHBP) is produced by phorbol ester-promoted proteolytic cleavage at the cell surface (shedding) by ADAM17/TACE. Shedding is inhibited by growth hormone (GH) binding to the receptor probably due to a conformational change in GHR rendering the receptor inaccessible to ADAM17. In terms of processing, on GH binding, phosphorylated on tyrosine residues in the cytoplasmic domain by JAK2. Ubiquitinated by the ECS(SOCS2) complex following ligand-binding and phosphorylation by JAK2, leading to its degradation by the proteasome. Regulation by the ECS(SOCS2) complex acts as a negative feedback loop of growth hormone receptor signaling. Ubiquitination is not sufficient for GHR internalization. Expressed in various tissues with high expression in liver and skeletal muscle. As to expression, isoform 2 is expressed in lung, stomach and muscle. In terms of tissue distribution, predominantly expressed in kidney, bladder, adrenal gland and brain stem. Highly expressed in placental villi.

Its subcellular location is the cell membrane. It localises to the secreted. In terms of biological role, receptor for pituitary gland growth hormone (GH1) involved in regulating postnatal body growth. On ligand binding, couples to the JAK2/STAT5 pathway. Functionally, the soluble form (GHBP) acts as a reservoir of growth hormone in plasma and may be a modulator/inhibitor of GH signaling. Its function is as follows. Up-regulates the production of the soluble Growth hormone-binding protein form (GHBP) and acts as a negative inhibitor of growth hormone signaling. This Homo sapiens (Human) protein is Growth hormone receptor (GHR).